The chain runs to 182 residues: Transcription termination/antitermination protein NusG (182 aa).

The 32-residue stretch at 130 to 161 (VGEVVRVNEGPFADFNGTVEEVDYEKSRLKVS) folds into the KOW domain.

It belongs to the NusG family.

Functionally, participates in transcription elongation, termination and antitermination. This chain is Transcription termination/antitermination protein NusG, found in Vibrio vulnificus (strain CMCP6).